Here is a 905-residue protein sequence, read N- to C-terminus: MTDKYSSNLVPVNIEDEMKASYLDYAMSVIVSRAIPDVRDGLKPVHRRIIYSMYEAGNHASKPYRKSARIVGDVMGKYHPHGDSAIYDSLVRMTQDFSLRLPLVDGQGNFGSMDGDAAAAMRYTESRMSKVAHKLVEDIDKGTVSFNINYDGSEEEPSVLPAMFPNLLVNGSGGIAVGMATNIPPHNLGEIIDACCLYIDNNDIEILDLLEVVKGPDFPTGSMILGISGIRSAYLTGRGSIIMRGKAEIENIGNSRQAIIITEIPYMVNKARLVEKIAEMVKEKRIEGISDLRDESNKNGVRIFIELKKDVVAEVVLNQIYACTQLQTNFGVIMLALKDGLPKVMNLKEVIAAFVSFREVVITNRTIYLLNKARDRAHILLGLAIAISNIDEIIYIIKASNDTNLAKQELMDRQWEVLDILPLIKLVDDKVMLNERGKLSFTEVQAKAILEMKLQRLTAMEKNKLEQDLKHLATEIAEYLNILDSRTRLLEILKEELIKVKEEFAVPRLTAIEFGEFDQDIEDLIQREEMVVTVTLGGYIKRVPLSSYRSQKRGGKGRSGLSMRDEDITMQVFVGSTHTPMLFFSNIGKVYSLKLYKLPLSNPQGKGRPMVNILPLQENEHITNIMPLPENQDEWDHLNIMFATAKGNIRRSDLLDFKKIQLNGKIAIRLDEDDKLIDVKPCKEDEHILLATKAGKALRFPVESLRIIKSRISDGVRGMKLAKEDSVISMTVLKGINSTKEDRDAYLTVPWEKRLKIAKGEEFNLEALGVHLNADSILEMANSEEFILTVTENGFGKRSSAYGYRITDRGGSGIINMDINDKTGLVVGVMPVKMDDELMLITNSGKLIRCKLESVRITGRNTSGVILFKLDDDEKVVSVSLIAETSESGEDSELVEDGLESAENM.

One can recognise a Topo IIA-type catalytic domain in the interval 35–524 (IPDVRDGLKP…GEFDQDIEDL (490 aa)). Y123 serves as the catalytic O-(5'-phospho-DNA)-tyrosine intermediate. Positions 551 to 557 (QKRGGKG) match the GyrA-box motif.

This sequence belongs to the type II topoisomerase GyrA/ParC subunit family. In terms of assembly, heterotetramer, composed of two GyrA and two GyrB chains. In the heterotetramer, GyrA contains the active site tyrosine that forms a transient covalent intermediate with DNA, while GyrB binds cofactors and catalyzes ATP hydrolysis.

It localises to the cytoplasm. It catalyses the reaction ATP-dependent breakage, passage and rejoining of double-stranded DNA.. A type II topoisomerase that negatively supercoils closed circular double-stranded (ds) DNA in an ATP-dependent manner to modulate DNA topology and maintain chromosomes in an underwound state. Negative supercoiling favors strand separation, and DNA replication, transcription, recombination and repair, all of which involve strand separation. Also able to catalyze the interconversion of other topological isomers of dsDNA rings, including catenanes and knotted rings. Type II topoisomerases break and join 2 DNA strands simultaneously in an ATP-dependent manner. The polypeptide is DNA gyrase subunit A (Rickettsia typhi (strain ATCC VR-144 / Wilmington)).